The primary structure comprises 76 residues: uncharacterized protein (76 aa).

This is an uncharacterized protein from Dictyostelium discoideum (Social amoeba).